The primary structure comprises 99 residues: Small ribosomal subunit protein bS20 (99 aa).

This sequence belongs to the bacterial ribosomal protein bS20 family.

Its function is as follows. Binds directly to 16S ribosomal RNA. The sequence is that of Small ribosomal subunit protein bS20 from Caldicellulosiruptor bescii (strain ATCC BAA-1888 / DSM 6725 / KCTC 15123 / Z-1320) (Anaerocellum thermophilum).